A 353-amino-acid chain; its full sequence is UPF0324 membrane protein PP_3661 (353 aa).

A run of 8 helical transmembrane segments spans residues 20 to 42, 70 to 92, 105 to 127, 137 to 159, 166 to 188, 234 to 253, 266 to 288, and 326 to 348; these read LNGI…MPAI, ASWA…AFFG, WSGL…WCGM, ALLT…ESAL, SAMA…PLAI, MTRV…WISR, IAMP…QVLP, and ALAT…TLGV.

This sequence belongs to the UPF0324 family.

The protein resides in the cell membrane. In Pseudomonas putida (strain ATCC 47054 / DSM 6125 / CFBP 8728 / NCIMB 11950 / KT2440), this protein is UPF0324 membrane protein PP_3661.